The sequence spans 120 residues: Large ribosomal subunit protein uL18 (120 aa).

The protein belongs to the universal ribosomal protein uL18 family. As to quaternary structure, part of the 50S ribosomal subunit; part of the 5S rRNA/L5/L18/L25 subcomplex. Contacts the 5S and 23S rRNAs.

In terms of biological role, this is one of the proteins that bind and probably mediate the attachment of the 5S RNA into the large ribosomal subunit, where it forms part of the central protuberance. The polypeptide is Large ribosomal subunit protein uL18 (Allorhizobium ampelinum (strain ATCC BAA-846 / DSM 112012 / S4) (Agrobacterium vitis (strain S4))).